The primary structure comprises 314 residues: Formate-nitrite transporter (314 aa).

At 1–47 (MSKGKSKYVIDPISVKTACTSEESYIRCVEYGKGKAHYPNLSLLAKA) the chain is on the cytoplasmic side. Residues 48 to 68 (ILAGVFVGVCAHASGIAGGHF) form a helical membrane-spanning segment. Residues 69 to 78 (YYHKLREYVG) lie on the Extracellular side of the membrane. The chain crosses the membrane as a helical span at residues 79–99 (ISMSAFVYGFTFPIAFLCIIA). Residues 100 to 128 (TGSDLFTGNTLAVTTALLQRKVSLLQYLR) are Cytoplasmic-facing. The chain crosses the membrane as a helical span at residues 129–149 (VMSISLFGNYLGAVSFAFFVS). The Extracellular portion of the chain corresponds to 150–185 (HLSGAYEKHTDVTKNHIFQFLNDIAEKKISHTFIQC). Residues 186 to 206 (ICLAIGCNIFVCLAVYFVLTI) traverse the membrane as a helical segment. The Cytoplasmic segment spans residues 207-211 (KDGSG). A helical membrane pass occupies residues 212 to 232 (MVFSVFFAVYAFAIAGYEHII). The Extracellular portion of the chain corresponds to 233-257 (ANMYTLNLALMVEAKVTWSKVYFHN). The chain crosses the membrane as a helical span at residues 258-278 (LLPTLIGNYIAGALVLACPLF). Residues 279–314 (YIYRNSYRDYERTRGDGSNCGLRSLSIEMQNGSNGN) lie on the Cytoplasmic side of the membrane.

The protein belongs to the FNT transporter (TC 1.A.16) family. Homopentamer.

The protein localises to the cell membrane. It is found in the vacuole membrane. It carries out the reaction (S)-lactate(in) + H(+)(in) = (S)-lactate(out) + H(+)(out). The enzyme catalyses formate(in) + H(+)(in) = formate(out) + H(+)(out). It catalyses the reaction pyruvate(out) + H(+)(out) = pyruvate(in) + H(+)(in). The catalysed reaction is acetate(out) + H(+)(out) = acetate(in) + H(+)(in). Its activity is regulated as follows. Inhibited by the Malaria Box compound MMV007839 and its derivatives BH296 and BH267.meta. Monocarboxylate-proton symporter that mediates the efflux of the waste product lactate in the intraerythrocytic parasites; active in acidic-to-neutral pH range. Transports L-lactate. This Plasmodium knowlesi (strain H) protein is Formate-nitrite transporter.